The primary structure comprises 128 residues: Large-conductance mechanosensitive channel (128 aa).

At 1–16 (MNFIKEFREFAMRGNV) the chain is on the cytoplasmic side. The chain crosses the membrane as a helical span at residues 17-45 (VDMAVGVIIGSAFGKIVSSLVSDIFTPVL). The Periplasmic portion of the chain corresponds to 46–74 (GILTGGIDFKDMKFVLAQAQGDVPAVTLN). The helical transmembrane segment at 75–94 (YGLFIQNVIDFIIIAFAIFM) threads the bilayer. Residues 95–128 (MIKVINKVRKPEEKKTAPKAETLLTEIRDLLKNK) lie on the Cytoplasmic side of the membrane.

The protein belongs to the MscL family. As to quaternary structure, homopentamer.

Its subcellular location is the cell inner membrane. Its function is as follows. Channel that opens in response to stretch forces in the membrane lipid bilayer. Forms a nonselective ion channel with a conductance of about 4 nanosiemens. May participate in the regulation of osmotic pressure changes within the cell. In Haemophilus influenzae (strain ATCC 51907 / DSM 11121 / KW20 / Rd), this protein is Large-conductance mechanosensitive channel.